The primary structure comprises 106 residues: Glycoprotein GP16 (106 aa).

Post-translationally, glycosylated.

It is found in the host cytoplasm. Its function is as follows. May be involved in formation or transport of the nucleocapsid-containing vesicles around the nuclear membrane. The polypeptide is Glycoprotein GP16 (GP16) (Autographa californica nuclear polyhedrosis virus (AcMNPV)).